The sequence spans 430 residues: Probable ribosomal RNA small subunit methyltransferase B (430 aa).

S-adenosyl-L-methionine-binding positions include 246 to 252, Asp270, Asp299, and Asp318; that span reads CAAPGSK. The active-site Nucleophile is Cys371.

The protein belongs to the class I-like SAM-binding methyltransferase superfamily. RsmB/NOP family.

Its subcellular location is the cytoplasm. It carries out the reaction cytidine(967) in 16S rRNA + S-adenosyl-L-methionine = 5-methylcytidine(967) in 16S rRNA + S-adenosyl-L-homocysteine + H(+). Specifically methylates the cytosine at position 967 (m5C967) of 16S rRNA. This Coxiella burnetii (strain RSA 493 / Nine Mile phase I) protein is Probable ribosomal RNA small subunit methyltransferase B.